The following is a 473-amino-acid chain: Ribulose bisphosphate carboxylase large chain (473 aa).

Substrate contacts are provided by Asn116 and Thr166. Lys168 acts as the Proton acceptor in catalysis. Lys170 contacts substrate. Residues Lys194, Asp196, and Glu197 each contribute to the Mg(2+) site. An N6-carboxylysine modification is found at Lys194. The Proton acceptor role is filled by His287. Substrate is bound by residues Arg288, His320, and Ser372.

Belongs to the RuBisCO large chain family. Type I subfamily. As to quaternary structure, heterohexadecamer of 8 large chains and 8 small chains. Mg(2+) serves as cofactor.

The enzyme catalyses 2 (2R)-3-phosphoglycerate + 2 H(+) = D-ribulose 1,5-bisphosphate + CO2 + H2O. It catalyses the reaction D-ribulose 1,5-bisphosphate + O2 = 2-phosphoglycolate + (2R)-3-phosphoglycerate + 2 H(+). Functionally, ruBisCO catalyzes two reactions: the carboxylation of D-ribulose 1,5-bisphosphate, the primary event in carbon dioxide fixation, as well as the oxidative fragmentation of the pentose substrate. Both reactions occur simultaneously and in competition at the same active site. The sequence is that of Ribulose bisphosphate carboxylase large chain from Nitrosospira sp. (strain TCH716).